A 197-amino-acid polypeptide reads, in one-letter code: Imidazoleglycerol-phosphate dehydratase (197 aa).

This sequence belongs to the imidazoleglycerol-phosphate dehydratase family.

It localises to the cytoplasm. The enzyme catalyses D-erythro-1-(imidazol-4-yl)glycerol 3-phosphate = 3-(imidazol-4-yl)-2-oxopropyl phosphate + H2O. Its pathway is amino-acid biosynthesis; L-histidine biosynthesis; L-histidine from 5-phospho-alpha-D-ribose 1-diphosphate: step 6/9. This chain is Imidazoleglycerol-phosphate dehydratase, found in Pseudomonas fluorescens (strain Pf0-1).